Reading from the N-terminus, the 151-residue chain is NAD(P)H-quinone oxidoreductase subunit N (151 aa).

The protein belongs to the complex I NdhN subunit family. In terms of assembly, NDH-1 can be composed of about 15 different subunits; different subcomplexes with different compositions have been identified which probably have different functions.

It is found in the cellular thylakoid membrane. It catalyses the reaction a plastoquinone + NADH + (n+1) H(+)(in) = a plastoquinol + NAD(+) + n H(+)(out). It carries out the reaction a plastoquinone + NADPH + (n+1) H(+)(in) = a plastoquinol + NADP(+) + n H(+)(out). NDH-1 shuttles electrons from an unknown electron donor, via FMN and iron-sulfur (Fe-S) centers, to quinones in the respiratory and/or the photosynthetic chain. The immediate electron acceptor for the enzyme in this species is believed to be plastoquinone. Couples the redox reaction to proton translocation, and thus conserves the redox energy in a proton gradient. Cyanobacterial NDH-1 also plays a role in inorganic carbon-concentration. This is NAD(P)H-quinone oxidoreductase subunit N from Acaryochloris marina (strain MBIC 11017).